The sequence spans 335 residues: tRNA pseudouridine synthase D (335 aa).

The active-site Nucleophile is the D77. In terms of domain architecture, TRUD spans G152–P308.

This sequence belongs to the pseudouridine synthase TruD family.

It catalyses the reaction uridine(13) in tRNA = pseudouridine(13) in tRNA. Functionally, responsible for synthesis of pseudouridine from uracil-13 in transfer RNAs. The sequence is that of tRNA pseudouridine synthase D from Histophilus somni (strain 129Pt) (Haemophilus somnus).